We begin with the raw amino-acid sequence, 79 residues long: UPF0291 protein lp_2062 (79 aa).

The protein belongs to the UPF0291 family.

Its subcellular location is the cytoplasm. The polypeptide is UPF0291 protein lp_2062 (Lactiplantibacillus plantarum (strain ATCC BAA-793 / NCIMB 8826 / WCFS1) (Lactobacillus plantarum)).